We begin with the raw amino-acid sequence, 147 residues long: uncharacterized protein (147 aa).

Residues 51 to 72 (VTSSMSVMNDSEECPLINGPSM) form a disordered region.

This is an uncharacterized protein from Gallid herpesvirus 2 (strain GA) (GaHV-2).